The following is a 241-amino-acid chain: 3-deoxy-D-manno-octulosonic acid kinase (241 aa).

Asp171 is a catalytic residue.

It belongs to the protein kinase superfamily. KdkA/RfaP family.

Its subcellular location is the cell inner membrane. It catalyses the reaction an alpha-Kdo-(2-&gt;6)-lipid IVA + ATP = a 4-O-phospho-alpha-Kdo-(2-&gt;6)-lipid IVA + ADP + H(+). Its pathway is bacterial outer membrane biogenesis; LPS core biosynthesis. Its function is as follows. Catalyzes the ATP-dependent phosphorylation of the 3-deoxy-D-manno-octulosonic acid (Kdo) residue in Kdo-lipid IV(A) at the 4-OH position. The sequence is that of 3-deoxy-D-manno-octulosonic acid kinase from Haemophilus influenzae (strain PittGG).